The following is a 339-amino-acid chain: Protein-glutamate methylesterase/protein-glutamine glutaminase 3 (339 aa).

Residues 2 to 119 (NIGIVNDLPL…GLSTDASPQA (118 aa)) form the Response regulatory domain. At Asp-53 the chain carries 4-aspartylphosphate. The 196-residue stretch at 141-336 (PGPAPTRGQP…PQLIARIALT (196 aa)) folds into the CheB-type methylesterase domain. Residues Ser-158, His-185, and Asp-278 contribute to the active site.

It belongs to the CheB family. Phosphorylated by CheA. Phosphorylation of the N-terminal regulatory domain activates the methylesterase activity.

Its subcellular location is the cytoplasm. It catalyses the reaction [protein]-L-glutamate 5-O-methyl ester + H2O = L-glutamyl-[protein] + methanol + H(+). It carries out the reaction L-glutaminyl-[protein] + H2O = L-glutamyl-[protein] + NH4(+). Its function is as follows. Involved in chemotaxis. Part of a chemotaxis signal transduction system that modulates chemotaxis in response to various stimuli. Catalyzes the demethylation of specific methylglutamate residues introduced into the chemoreceptors (methyl-accepting chemotaxis proteins or MCP) by CheR. Also mediates the irreversible deamidation of specific glutamine residues to glutamic acid. The chain is Protein-glutamate methylesterase/protein-glutamine glutaminase 3 from Burkholderia orbicola (strain AU 1054).